The following is a 1008-amino-acid chain: PWWP domain-containing protein 3 (1008 aa).

Residues Val-78–Glu-122 are a coiled coil. The tract at residues Leu-84–Gly-124 is disordered. Positions Asp-87–Glu-122 are enriched in acidic residues. The PWWP domain maps to Val-127–Ser-188. Disordered regions lie at residues Glu-307–Trp-339, Glu-399–Glu-606, and Asn-668–Ser-874. Acidic residues predominate over residues Asn-321–Glu-330. Basic and acidic residues predominate over residues Glu-399 to Ser-409. Acidic residues predominate over residues Asp-473 to Glu-490. 3 stretches are compositionally biased toward basic and acidic residues: residues Arg-511 to Glu-522, Ser-677 to Glu-687, and Gln-707 to His-725. A compositionally biased stretch (basic residues) spans Gly-726 to Glu-738. Basic and acidic residues-rich tracts occupy residues Ser-739 to Lys-758, Ser-768 to Lys-787, and Asn-794 to Lys-818. Short sequence motifs (nuclear localization signal) lie at residues Thr-786–Lys-793, Thr-809–Ser-816, and Glu-841–Arg-848. Residues Val-804 to Lys-824 are a coiled coil. Over residues Lys-842–Lys-854 the composition is skewed to basic residues.

This sequence belongs to the PDP family. In terms of assembly, interacts with DEK3. Binds to LHP1, MSI4/FVE and MSI5. Component of the PRC2 (polycomb repressive complex 2) complex which regulates histone methylation on histone H3K27.

The protein resides in the nucleus. Together with PDP1, PDP2 and PDP6, interacts with MSI4/FVE and MSI5 to suppress FLC, MAF4 and MAF5 expression by regulating the function of the PRC2 complex and modulating H3K27me3 level, thereby promoting flowering. This chain is PWWP domain-containing protein 3, found in Arabidopsis thaliana (Mouse-ear cress).